Here is a 626-residue protein sequence, read N- to C-terminus: Biosynthetic arginine decarboxylase (626 aa).

Lys-99 is subject to N6-(pyridoxal phosphate)lysine. 279–289 (VDVGGGLGVDY) is a substrate binding site.

This sequence belongs to the Orn/Lys/Arg decarboxylase class-II family. SpeA subfamily. Requires Mg(2+) as cofactor. Pyridoxal 5'-phosphate serves as cofactor.

The catalysed reaction is L-arginine + H(+) = agmatine + CO2. It functions in the pathway amine and polyamine biosynthesis; agmatine biosynthesis; agmatine from L-arginine: step 1/1. Functionally, catalyzes the biosynthesis of agmatine from arginine. The polypeptide is Biosynthetic arginine decarboxylase (Chromobacterium violaceum (strain ATCC 12472 / DSM 30191 / JCM 1249 / CCUG 213 / NBRC 12614 / NCIMB 9131 / NCTC 9757 / MK)).